The sequence spans 108 residues: L-rhamnose mutarotase (108 aa).

Tyr-18 contacts substrate. His-22 (proton donor) is an active-site residue. Substrate contacts are provided by residues Tyr-41 and 76 to 77; that span reads WW.

It belongs to the rhamnose mutarotase family. In terms of assembly, homodimer.

Its subcellular location is the cytoplasm. It carries out the reaction alpha-L-rhamnose = beta-L-rhamnose. The protein operates within carbohydrate metabolism; L-rhamnose metabolism. In terms of biological role, involved in the anomeric conversion of L-rhamnose. In Paraburkholderia phymatum (strain DSM 17167 / CIP 108236 / LMG 21445 / STM815) (Burkholderia phymatum), this protein is L-rhamnose mutarotase.